Reading from the N-terminus, the 227-residue chain is Phosphatidylserine decarboxylase proenzyme (227 aa).

The active-site Schiff-base intermediate with substrate; via pyruvic acid is serine 181. Position 181 is a pyruvic acid (Ser); by autocatalysis (serine 181).

The protein belongs to the phosphatidylserine decarboxylase family. PSD-A subfamily. In terms of assembly, heterodimer of a large membrane-associated beta subunit and a small pyruvoyl-containing alpha subunit. It depends on pyruvate as a cofactor. Is synthesized initially as an inactive proenzyme. Formation of the active enzyme involves a self-maturation process in which the active site pyruvoyl group is generated from an internal serine residue via an autocatalytic post-translational modification. Two non-identical subunits are generated from the proenzyme in this reaction, and the pyruvate is formed at the N-terminus of the alpha chain, which is derived from the carboxyl end of the proenzyme. The post-translation cleavage follows an unusual pathway, termed non-hydrolytic serinolysis, in which the side chain hydroxyl group of the serine supplies its oxygen atom to form the C-terminus of the beta chain, while the remainder of the serine residue undergoes an oxidative deamination to produce ammonia and the pyruvoyl prosthetic group on the alpha chain.

The protein resides in the cell membrane. It catalyses the reaction a 1,2-diacyl-sn-glycero-3-phospho-L-serine + H(+) = a 1,2-diacyl-sn-glycero-3-phosphoethanolamine + CO2. It participates in phospholipid metabolism; phosphatidylethanolamine biosynthesis; phosphatidylethanolamine from CDP-diacylglycerol: step 2/2. Its function is as follows. Catalyzes the formation of phosphatidylethanolamine (PtdEtn) from phosphatidylserine (PtdSer). The polypeptide is Phosphatidylserine decarboxylase proenzyme (Anaplasma phagocytophilum (strain HZ)).